The chain runs to 260 residues: Small ribosomal subunit protein uS2 (260 aa).

Belongs to the universal ribosomal protein uS2 family.

This Mesorhizobium japonicum (strain LMG 29417 / CECT 9101 / MAFF 303099) (Mesorhizobium loti (strain MAFF 303099)) protein is Small ribosomal subunit protein uS2.